Reading from the N-terminus, the 183-residue chain is ATP synthase subunit b, chloroplastic (183 aa).

The helical transmembrane segment at 28–48 (DIFEANVINILLLLFGLIYVL) threads the bilayer.

This sequence belongs to the ATPase B chain family. As to quaternary structure, F-type ATPases have 2 components, F(1) - the catalytic core - and F(0) - the membrane proton channel. F(1) has five subunits: alpha(3), beta(3), gamma(1), delta(1), epsilon(1). F(0) has four main subunits: a(1), b(1), b'(1) and c(10-14). The alpha and beta chains form an alternating ring which encloses part of the gamma chain. F(1) is attached to F(0) by a central stalk formed by the gamma and epsilon chains, while a peripheral stalk is formed by the delta, b and b' chains.

It localises to the plastid. Its subcellular location is the chloroplast thylakoid membrane. In terms of biological role, f(1)F(0) ATP synthase produces ATP from ADP in the presence of a proton or sodium gradient. F-type ATPases consist of two structural domains, F(1) containing the extramembraneous catalytic core and F(0) containing the membrane proton channel, linked together by a central stalk and a peripheral stalk. During catalysis, ATP synthesis in the catalytic domain of F(1) is coupled via a rotary mechanism of the central stalk subunits to proton translocation. Its function is as follows. Component of the F(0) channel, it forms part of the peripheral stalk, linking F(1) to F(0). This Porphyra purpurea (Red seaweed) protein is ATP synthase subunit b, chloroplastic.